We begin with the raw amino-acid sequence, 701 residues long: Transcription factor PDR8 (701 aa).

Positions 1 to 22 (MDGSHFPMKSTTGEPVSSGKKG) are disordered. Positions 31–59 (CAFCRKRKLKCSQARPMCQQCVIRKLPQC) form a DNA-binding region, zn(2)-C6 fungal-type.

Its subcellular location is the cytoplasm. It localises to the nucleus. In terms of biological role, up-regulates the transcription of the genes for ATP-binding cassette (ABC) transporters YOR1 and PDR15, for major facilitator superfamily transporter AZR1, for pleiotropic drug resistance SNG1, for alpha-glucosidase YJL216C and for YLL056C. This is Transcription factor PDR8 (PDR8) from Saccharomyces cerevisiae (strain ATCC 204508 / S288c) (Baker's yeast).